Reading from the N-terminus, the 445-residue chain is Methionine aminopeptidase 2-3 (445 aa).

The interval 14 to 115 (ISDADANGAD…ENRYRTTSEE (102 aa)) is disordered. Residues 38–47 (EDDDSDDDVA) show a composition bias toward acidic residues. Basic residues predominate over residues 60 to 75 (AKKKKNKKRKPKKKQP). The span at 85–95 (PLSQLFPNNTY) shows a compositional bias: polar residues. The segment covering 97 to 115 (KGEEVEYKDENRYRTTSEE) has biased composition (basic and acidic residues). His-198 contributes to the substrate binding site. A divalent metal cation-binding residues include Asp-218, Asp-229, and His-298. Position 306 (His-306) interacts with substrate. A divalent metal cation is bound by residues Glu-331 and Glu-426.

This sequence belongs to the peptidase M24A family. Methionine aminopeptidase eukaryotic type 2 subfamily. Requires Co(2+) as cofactor. It depends on Zn(2+) as a cofactor. Mn(2+) serves as cofactor. The cofactor is Fe(2+).

Its subcellular location is the cytoplasm. The catalysed reaction is Release of N-terminal amino acids, preferentially methionine, from peptides and arylamides.. Functionally, cotranslationally removes the N-terminal methionine from nascent proteins. The N-terminal methionine is often cleaved when the second residue in the primary sequence is small and uncharged (Met-Ala-, Cys, Gly, Pro, Ser, Thr, or Val). The polypeptide is Methionine aminopeptidase 2-3 (Neosartorya fischeri (strain ATCC 1020 / DSM 3700 / CBS 544.65 / FGSC A1164 / JCM 1740 / NRRL 181 / WB 181) (Aspergillus fischerianus)).